Consider the following 372-residue polypeptide: Dual-specificity RNA methyltransferase RlmN (372 aa).

E94 acts as the Proton acceptor in catalysis. The Radical SAM core domain maps to D100 to D339. C107 and C344 are oxidised to a cystine. The [4Fe-4S] cluster site is built by C114, C118, and C121. Residues G168–E169, S200, S222–H224, and N301 contribute to the S-adenosyl-L-methionine site. The S-methylcysteine intermediate role is filled by C344.

This sequence belongs to the radical SAM superfamily. RlmN family. [4Fe-4S] cluster is required as a cofactor.

It localises to the cytoplasm. The enzyme catalyses adenosine(2503) in 23S rRNA + 2 reduced [2Fe-2S]-[ferredoxin] + 2 S-adenosyl-L-methionine = 2-methyladenosine(2503) in 23S rRNA + 5'-deoxyadenosine + L-methionine + 2 oxidized [2Fe-2S]-[ferredoxin] + S-adenosyl-L-homocysteine. It catalyses the reaction adenosine(37) in tRNA + 2 reduced [2Fe-2S]-[ferredoxin] + 2 S-adenosyl-L-methionine = 2-methyladenosine(37) in tRNA + 5'-deoxyadenosine + L-methionine + 2 oxidized [2Fe-2S]-[ferredoxin] + S-adenosyl-L-homocysteine. Functionally, specifically methylates position 2 of adenine 2503 in 23S rRNA and position 2 of adenine 37 in tRNAs. m2A2503 modification seems to play a crucial role in the proofreading step occurring at the peptidyl transferase center and thus would serve to optimize ribosomal fidelity. The protein is Dual-specificity RNA methyltransferase RlmN of Aliivibrio fischeri (strain MJ11) (Vibrio fischeri).